Reading from the N-terminus, the 120-residue chain is Phosphoribosyl-AMP cyclohydrolase (120 aa).

D75 provides a ligand contact to Mg(2+). C76 lines the Zn(2+) pocket. Residues D77 and D79 each contribute to the Mg(2+) site. Zn(2+) is bound by residues C92 and C99.

It belongs to the PRA-CH family. Homodimer. Mg(2+) serves as cofactor. Requires Zn(2+) as cofactor.

It is found in the cytoplasm. It carries out the reaction 1-(5-phospho-beta-D-ribosyl)-5'-AMP + H2O = 1-(5-phospho-beta-D-ribosyl)-5-[(5-phospho-beta-D-ribosylamino)methylideneamino]imidazole-4-carboxamide. It participates in amino-acid biosynthesis; L-histidine biosynthesis; L-histidine from 5-phospho-alpha-D-ribose 1-diphosphate: step 3/9. In terms of biological role, catalyzes the hydrolysis of the adenine ring of phosphoribosyl-AMP. This is Phosphoribosyl-AMP cyclohydrolase from Methanosarcina mazei (strain ATCC BAA-159 / DSM 3647 / Goe1 / Go1 / JCM 11833 / OCM 88) (Methanosarcina frisia).